The chain runs to 361 residues: tRNA 2-selenouridine synthase (361 aa).

The region spanning 11–134 (LIADTPLIDV…LRQTAIQATW (124 aa)) is the Rhodanese domain. Catalysis depends on Cys94, which acts as the S-selanylcysteine intermediate.

The protein belongs to the SelU family. Monomer.

The catalysed reaction is 5-methylaminomethyl-2-thiouridine(34) in tRNA + selenophosphate + (2E)-geranyl diphosphate + H2O + H(+) = 5-methylaminomethyl-2-selenouridine(34) in tRNA + (2E)-thiogeraniol + phosphate + diphosphate. The enzyme catalyses 5-methylaminomethyl-2-thiouridine(34) in tRNA + (2E)-geranyl diphosphate = 5-methylaminomethyl-S-(2E)-geranyl-thiouridine(34) in tRNA + diphosphate. It carries out the reaction 5-methylaminomethyl-S-(2E)-geranyl-thiouridine(34) in tRNA + selenophosphate + H(+) = 5-methylaminomethyl-2-(Se-phospho)selenouridine(34) in tRNA + (2E)-thiogeraniol. It catalyses the reaction 5-methylaminomethyl-2-(Se-phospho)selenouridine(34) in tRNA + H2O = 5-methylaminomethyl-2-selenouridine(34) in tRNA + phosphate. Involved in the post-transcriptional modification of the uridine at the wobble position (U34) of tRNA(Lys), tRNA(Glu) and tRNA(Gln). Catalyzes the conversion of 2-thiouridine (S2U-RNA) to 2-selenouridine (Se2U-RNA). Acts in a two-step process involving geranylation of 2-thiouridine (S2U) to S-geranyl-2-thiouridine (geS2U) and subsequent selenation of the latter derivative to 2-selenouridine (Se2U) in the tRNA chain. This Salmonella arizonae (strain ATCC BAA-731 / CDC346-86 / RSK2980) protein is tRNA 2-selenouridine synthase.